A 184-amino-acid polypeptide reads, in one-letter code: ATP synthase subunit b, chloroplastic (184 aa).

The chain crosses the membrane as a helical span at residues L27–L49.

Belongs to the ATPase B chain family. As to quaternary structure, F-type ATPases have 2 components, F(1) - the catalytic core - and F(0) - the membrane proton channel. F(1) has five subunits: alpha(3), beta(3), gamma(1), delta(1), epsilon(1). F(0) has four main subunits: a(1), b(1), b'(1) and c(10-14). The alpha and beta chains form an alternating ring which encloses part of the gamma chain. F(1) is attached to F(0) by a central stalk formed by the gamma and epsilon chains, while a peripheral stalk is formed by the delta, b and b' chains.

The protein localises to the plastid. It is found in the chloroplast thylakoid membrane. In terms of biological role, f(1)F(0) ATP synthase produces ATP from ADP in the presence of a proton or sodium gradient. F-type ATPases consist of two structural domains, F(1) containing the extramembraneous catalytic core and F(0) containing the membrane proton channel, linked together by a central stalk and a peripheral stalk. During catalysis, ATP synthesis in the catalytic domain of F(1) is coupled via a rotary mechanism of the central stalk subunits to proton translocation. Functionally, component of the F(0) channel, it forms part of the peripheral stalk, linking F(1) to F(0). This is ATP synthase subunit b, chloroplastic from Manihot esculenta (Cassava).